Consider the following 406-residue polypeptide: 5-methylthioadenosine/S-adenosylhomocysteine deaminase (406 aa).

Residues His55 and His57 each contribute to the Zn(2+) site. The substrate site is built by Glu84, Arg136, Arg148, and His173. His200 lines the Zn(2+) pocket. Substrate-binding residues include Glu203 and Asp279. Asp279 provides a ligand contact to Zn(2+).

It belongs to the metallo-dependent hydrolases superfamily. MTA/SAH deaminase family. It depends on Zn(2+) as a cofactor.

It catalyses the reaction S-adenosyl-L-homocysteine + H2O + H(+) = S-inosyl-L-homocysteine + NH4(+). The catalysed reaction is S-methyl-5'-thioadenosine + H2O + H(+) = S-methyl-5'-thioinosine + NH4(+). In terms of biological role, catalyzes the deamination of 5-methylthioadenosine and S-adenosyl-L-homocysteine into 5-methylthioinosine and S-inosyl-L-homocysteine, respectively. Is also able to deaminate adenosine. Adenosine-5-monophosphate (AMP) and S-adenosyl-L-methionine (SAM) are not enzyme substrates. The chain is 5-methylthioadenosine/S-adenosylhomocysteine deaminase (mtaD) from Thermotoga maritima (strain ATCC 43589 / DSM 3109 / JCM 10099 / NBRC 100826 / MSB8).